We begin with the raw amino-acid sequence, 250 residues long: MGQKSNPNGLRLGIIRTWESKWYDVDKKVPFLVGEDFKIRTLIKNHYPKSTISQIEIKRLKKSNDEFIEIDLYTSKIGIIQGPENKNKNSLINKIEKLINKKVQINIFEVKAINKIAVLVAQNIAMQLQQRAFYKAVLKSAIQKALKSGIKGIKIIITGRLGGAEKARRDSISMGVVPLNTLRADIDYAFEEAHTTYGVLGVKVIINHGEVLPNKTIADTRQIFSSQYENKKNNNKRHFVDKKNFKKNTS.

Residues I39–K111 enclose the KH type-2 domain.

This sequence belongs to the universal ribosomal protein uS3 family. As to quaternary structure, part of the 30S ribosomal subunit. Forms a tight complex with proteins S10 and S14.

Functionally, binds the lower part of the 30S subunit head. Binds mRNA in the 70S ribosome, positioning it for translation. This chain is Small ribosomal subunit protein uS3, found in Rubus stunt phytoplasma.